The primary structure comprises 156 residues: Small ribosomal subunit protein uS7 (156 aa).

Belongs to the universal ribosomal protein uS7 family. As to quaternary structure, part of the 30S ribosomal subunit. Contacts proteins S9 and S11.

Its function is as follows. One of the primary rRNA binding proteins, it binds directly to 16S rRNA where it nucleates assembly of the head domain of the 30S subunit. Is located at the subunit interface close to the decoding center, probably blocks exit of the E-site tRNA. This Maridesulfovibrio salexigens (strain ATCC 14822 / DSM 2638 / NCIMB 8403 / VKM B-1763) (Desulfovibrio salexigens) protein is Small ribosomal subunit protein uS7.